Reading from the N-terminus, the 607-residue chain is Chaperone protein DnaK (607 aa).

Thr174 bears the Phosphothreonine; by autocatalysis mark. Residues 571 to 607 form a disordered region; the sequence is AAMYQKQAQQQQPGPGPDAGKDKDDKDKTVDADYEVK. The span at 589 to 607 shows a compositional bias: basic and acidic residues; the sequence is AGKDKDDKDKTVDADYEVK.

It belongs to the heat shock protein 70 family.

Acts as a chaperone. This Desulforudis audaxviator (strain MP104C) protein is Chaperone protein DnaK.